Here is a 500-residue protein sequence, read N- to C-terminus: ATP synthase subunit alpha (500 aa).

169–176 (GDRQTGKT) serves as a coordination point for ATP.

The protein belongs to the ATPase alpha/beta chains family. In terms of assembly, F-type ATPases have 2 components, CF(1) - the catalytic core - and CF(0) - the membrane proton channel. CF(1) has five subunits: alpha(3), beta(3), gamma(1), delta(1), epsilon(1). CF(0) has three main subunits: a(1), b(2) and c(9-12). The alpha and beta chains form an alternating ring which encloses part of the gamma chain. CF(1) is attached to CF(0) by a central stalk formed by the gamma and epsilon chains, while a peripheral stalk is formed by the delta and b chains.

The protein resides in the cell membrane. The enzyme catalyses ATP + H2O + 4 H(+)(in) = ADP + phosphate + 5 H(+)(out). Produces ATP from ADP in the presence of a proton gradient across the membrane. The alpha chain is a regulatory subunit. This is ATP synthase subunit alpha from Lactococcus lactis subsp. cremoris (strain MG1363).